The chain runs to 438 residues: Coenzyme A disulfide reductase (438 aa).

Residue 8-33 (GAVAGGATCASQIRRLDKESDIIIFE) participates in FAD binding. Substrate contacts are provided by threonine 15, glutamine 19, arginine 22, serine 39, and asparagine 42. Cysteine 43 functions as the Nucleophile in the catalytic mechanism. Cysteine 43 serves as the catalytic Redox-active. Residue lysine 71 coordinates substrate. 151-166 (VLVIGAGYVSLEVLEN) contacts NADP(+). FAD is bound at residue 267–277 (TNVPNIYAIGD). Position 299 (histidine 299) interacts with substrate. Position 419 (tyrosine 419) interacts with FAD. Residue lysine 427 coordinates substrate.

Belongs to the class-III pyridine nucleotide-disulfide oxidoreductase family. As to quaternary structure, homodimer. FAD is required as a cofactor.

It carries out the reaction NADP(+) + 2 CoA = CoA-disulfide + NADPH + H(+). Functionally, catalyzes specifically the NADPH-dependent reduction of coenzyme A disulfide. In Staphylococcus aureus (strain JH1), this protein is Coenzyme A disulfide reductase.